The sequence spans 174 residues: Pituitary tumor-transforming gene 1 protein-interacting protein (174 aa).

The first 29 residues, 1–29 (MAPANLGLTPHWVMLLGAVLLLLLSGASA), serve as a signal peptide directing secretion. The Extracellular segment spans residues 30-93 (QEPPRVGCSE…RWGVCWVNFE (64 aa)). The PSI domain maps to 36-89 (GCSEYTNRSCEECLRNVSCLWCNENKACMDYPVRKILPPASLCKLSSARWGVCW). Residues Asn-42 and Asn-51 are each glycosylated (N-linked (GlcNAc...) asparagine). Residues 94-114 (ALIITMSVLGGSVLLGITVCC) traverse the membrane as a helical segment. The Cytoplasmic portion of the chain corresponds to 115–174 (CYCCRRKKSRKPDKSDERAMREQEERRVRQEERRAEMKSRHDEIRKKYGLFKEQNPYEKF). The interval 125–155 (KPDKSDERAMREQEERRVRQEERRAEMKSRH) is disordered. Basic and acidic residues predominate over residues 126–155 (PDKSDERAMREQEERRVRQEERRAEMKSRH). Positions 127-163 (DKSDERAMREQEERRVRQEERRAEMKSRHDEIRKKYG) form a coiled coil. Residue Tyr-171 is modified to Phosphotyrosine.

Interacts with PTTG1.

Its subcellular location is the cell membrane. The protein localises to the cytoplasm. It is found in the nucleus. Functionally, may facilitate PTTG1 nuclear translocation. This Mus musculus (Mouse) protein is Pituitary tumor-transforming gene 1 protein-interacting protein (Pttg1ip).